Reading from the N-terminus, the 401-residue chain is L-rhamnonate dehydratase (401 aa).

Substrate is bound by residues histidine 29 and arginine 55. Residues aspartate 222, glutamate 248, and glutamate 276 each contribute to the Mg(2+) site. Histidine 325 serves as the catalytic Proton acceptor. Glutamate 345 lines the substrate pocket.

This sequence belongs to the mandelate racemase/muconate lactonizing enzyme family. RhamD subfamily. Homooctamer; tetramer of dimers. Mg(2+) is required as a cofactor.

It carries out the reaction L-rhamnonate = 2-dehydro-3-deoxy-L-rhamnonate + H2O. Its function is as follows. Catalyzes the dehydration of L-rhamnonate to 2-keto-3-deoxy-L-rhamnonate (KDR). The sequence is that of L-rhamnonate dehydratase from Escherichia coli O157:H7.